Consider the following 846-residue polypeptide: Penicillin G acylase (846 aa).

The first 26 residues, 1–26, serve as a signal peptide directing secretion; sequence MKNRNRMIVNCVTASLMYYWSLPALA. Position 178 (glutamate 178) interacts with Ca(2+). Positions 236–289 are cleaved as a propeptide — spacer peptide; that stretch reads ALLPRYDLPAPMLDRPAKGADGALLALTAGKNRETIAAQFAQGGANGLAGYPTT. Catalysis depends on serine 290, which acts as the Nucleophile. The Ca(2+) site is built by aspartate 362, valine 364, aspartate 365, proline 494, and aspartate 541.

Belongs to the peptidase S45 family. In terms of assembly, heterodimer of an alpha subunit and a beta subunit processed from the same precursor. Ca(2+) serves as cofactor.

It is found in the periplasm. The catalysed reaction is a penicillin + H2O = 6-aminopenicillanate + a carboxylate. The chain is Penicillin G acylase (pac) from Escherichia coli.